The sequence spans 194 residues: CD-NTase-associated protein 15 (194 aa).

The interval 1–73 is required for cell toxicity; it reads MRMWELLPSK…DYLKHKFCPD (73 aa). 2 helical membrane-spanning segments follow: residues 15–35 and 43–63; these read ISTI…GQPV and ITTI…YFYI.

This sequence belongs to the CBASS Cap15 membrane effector family. As to quaternary structure, the beta barrel domain oligomerizes; in the presence of cyclic nucleotides (probably 3',3'-cGAMP, but the cognate CD-NTase makes at least 4 other cyclic nucleotides) higher-level oligomers are detected.

The protein resides in the cell inner membrane. Its function is as follows. Effector protein of a CBASS antivirus system. CBASS (cyclic oligonucleotide-based antiphage signaling system) provides immunity against bacteriophages. The CD-NTase protein (CdnB) synthesizes cyclic nucleotides in response to infection; these serve as specific second messenger signals. The signals activate a diverse range of effectors, leading to bacterial cell death and thus abortive phage infection. Causes cell death in response to 3',3'-cGAMP upon coexpression in E.coli with V.cholerae DncV; inactivating DncV prevents cell death. Upon induction in E.coli with non-cognate DncV, the cell inner membrane shrinks and separates from the cell wall with a concomitant increase in the periplasm. Binds cyclic nucleotide second messenger 3',3'-cGAMP, probably oligomerizing, and induces cell membrane shrinkage and rupture, leading to cell death. A type I CBASS system. Protects E.coli against phage infection. When the CBASS operon (cdnB-cap15) is introduced in E.coli MG1655 there is about 100-fold protection against phage T2 and about 10-fold protection against phage T5 and T6. In Escherichia albertii, this protein is CD-NTase-associated protein 15.